We begin with the raw amino-acid sequence, 808 residues long: DNA ligase (808 aa).

Positions 1 to 30 (MSISDDISPVPPAPVSEPNAGQDAGQDAAP) are disordered. Positions 18–30 (PNAGQDAGQDAAP) are enriched in low complexity. Residues 61–65 (DAEYD), 110–111 (SL), and Asp141 each bind NAD(+). The N6-AMP-lysine intermediate role is filled by Lys143. Residues Arg164, Glu202, Lys334, and Lys358 each coordinate NAD(+). Residues Cys453, Cys456, Cys471, and Cys476 each coordinate Zn(2+). A BRCT domain is found at 644–733 (EGSGPLAGLR…GGDVPEDGDG (90 aa)). Residues 720–808 (LEGRGGDVPE…PRKKDQHSLL (89 aa)) form a disordered region. The span at 727 to 742 (VPEDGDGAPGNEDEAP) shows a compositional bias: acidic residues. Residues 746-773 (ADVPAAPEVLADAPAAISADASSGVAPG) show a composition bias toward low complexity. The segment covering 779 to 792 (DRADMTDRTVRTDS) has biased composition (basic and acidic residues).

The protein belongs to the NAD-dependent DNA ligase family. LigA subfamily. Requires Mg(2+) as cofactor. Mn(2+) serves as cofactor.

It catalyses the reaction NAD(+) + (deoxyribonucleotide)n-3'-hydroxyl + 5'-phospho-(deoxyribonucleotide)m = (deoxyribonucleotide)n+m + AMP + beta-nicotinamide D-nucleotide.. Functionally, DNA ligase that catalyzes the formation of phosphodiester linkages between 5'-phosphoryl and 3'-hydroxyl groups in double-stranded DNA using NAD as a coenzyme and as the energy source for the reaction. It is essential for DNA replication and repair of damaged DNA. The sequence is that of DNA ligase from Nitratidesulfovibrio vulgaris (strain DSM 19637 / Miyazaki F) (Desulfovibrio vulgaris).